Consider the following 516-residue polypeptide: Probable cytochrome P450 9f2 (516 aa).

Cysteine 460 provides a ligand contact to heme.

This sequence belongs to the cytochrome P450 family. The cofactor is heme.

The protein resides in the endoplasmic reticulum membrane. The protein localises to the microsome membrane. In terms of biological role, may be involved in the metabolism of insect hormones and in the breakdown of synthetic insecticides. The polypeptide is Probable cytochrome P450 9f2 (Cyp9f2) (Drosophila melanogaster (Fruit fly)).